The primary structure comprises 269 residues: MSRLQTRFDQLKEQNRAALVTFVTAGDPGYDTSLAILKGLPAAGADVIELGMPFTDPMADGPAIQLANIRALEAKQNLLKTLQMVREFRKGNNDTPLVLMGYFNPIHKYGVPKFIADAKEAGVDGLIVVDMPPEHNGELCDPAQAAGIDFIRLTTPTTDDVRLPTVLNGSSGFVYYVSVAGVTGAGAATLEHVEEAVARLRRHTDLPISIGFGIRTPEQAAAIARLADGVVVGSALIDHIANAKNDQQAIDGVLGLCAALSEGVRNASV.

Catalysis depends on proton acceptor residues glutamate 49 and aspartate 60.

It belongs to the TrpA family. Tetramer of two alpha and two beta chains.

The enzyme catalyses (1S,2R)-1-C-(indol-3-yl)glycerol 3-phosphate + L-serine = D-glyceraldehyde 3-phosphate + L-tryptophan + H2O. Its pathway is amino-acid biosynthesis; L-tryptophan biosynthesis; L-tryptophan from chorismate: step 5/5. The alpha subunit is responsible for the aldol cleavage of indoleglycerol phosphate to indole and glyceraldehyde 3-phosphate. This Pseudomonas syringae pv. syringae protein is Tryptophan synthase alpha chain.